The following is a 335-amino-acid chain: Spliceosome-associated protein 49 (335 aa).

2 consecutive RRM domains span residues 13–84 (IYLG…PIRV) and 101–172 (LFVG…PITV). Residues 204–223 (VTPQSTLPPGFSPATPAPTS) form a disordered region.

Belongs to the SF3B4 family.

It localises to the nucleus. This Schizosaccharomyces pombe (strain 972 / ATCC 24843) (Fission yeast) protein is Spliceosome-associated protein 49 (sap49).